The following is a 247-amino-acid chain: Molybdate/tungstate transport system permease protein WtpB (247 aa).

Residues 1 to 8 lie on the Cytoplasmic side of the membrane; that stretch reads MRRDYTLY. A helical membrane pass occupies residues 9–29; that stretch reads LFAALGTFLIAYIAVPIAVIF. Over 30 to 55 the chain is Extracellular; that stretch reads LKQASDVEMLVKTLHDPYVIEAIRNS. The ABC transmembrane type-1 domain occupies 52-238; that stretch reads IRNSLLTATA…SLSLGIFVIL (187 aa). The helical transmembrane segment at 56-76 threads the bilayer; sequence LLTATATALIALLFGVPLGYV. Topologically, residues 77–90 are cytoplasmic; it reads LARKDFPGKSAVQA. Residues 91–111 traverse the membrane as a helical segment; that stretch reads LVDVPIVIPHSVVGIMLLVTF. At 112-114 the chain is on the extracellular side; the sequence is SNS. Residues 115–135 form a helical membrane-spanning segment; that stretch reads ILDSYKGIVAAMLFVSAPFTI. Residues 136–163 lie on the Cytoplasmic side of the membrane; it reads NAARDGFLAVDEKLEAVARTLGASRWRA. Residues 164-184 form a helical membrane-spanning segment; sequence FLSISLPMAFPSIASGAIMTW. The Extracellular portion of the chain corresponds to 185–222; the sequence is ARAISEVGAILIVAYYPKTAQVLILEYFNNYGLRASRP. A helical transmembrane segment spans residues 223 to 243; that stretch reads IAVIMVSLSLGIFVILRWLVG. The Cytoplasmic segment spans residues 244–247; that stretch reads RKNA.

It belongs to the binding-protein-dependent transport system permease family. In terms of assembly, the complex is composed of two ATP-binding proteins (WtpC), two transmembrane proteins (WtpB) and a solute-binding protein (WtpA).

The protein localises to the cell membrane. In terms of biological role, part of the ABC transporter complex WtpABC involved in molybdate/tungstate import. Probably responsible for the translocation of the substrate across the membrane. This chain is Molybdate/tungstate transport system permease protein WtpB (wtpB), found in Thermococcus kodakarensis (strain ATCC BAA-918 / JCM 12380 / KOD1) (Pyrococcus kodakaraensis (strain KOD1)).